Reading from the N-terminus, the 368-residue chain is Probable acetylxylan esterase A (368 aa).

The first 19 residues, 1–19, serve as a signal peptide directing secretion; sequence MRALSVFFALFCFLALSSA. Positions 20-28 are excised as a propeptide; the sequence is SPGQDVVKR. Positions 32-304 are catalytic; that stretch reads GSLQQVTNFG…GEQDMEWFGF (273 aa). Catalysis depends on serine 149, which acts as the Charge relay system. Asparagine 191 carries an N-linked (GlcNAc...) asparagine glycan. The tract at residues 305–333 is ser/Thr-rich linker; that stretch reads AGGSSTTTTQPTTTSTTTSSGGSSTGTGV. A disordered region spans residues 306–330; the sequence is GGSSTTTTQPTTTSTTTSSGGSSTG. Low complexity predominate over residues 307 to 330; sequence GSSTTTTQPTTTSTTTSSGGSSTG. In terms of domain architecture, CBM1 spans 332 to 368; sequence GVAAHWGQCGGNGWTGPTVCASGYTCTVVNAWYSQCL.

The protein belongs to the carbohydrate esterase 1 (CE1) family. AxeA subfamily. Monomer.

It localises to the secreted. It carries out the reaction Deacetylation of xylans and xylo-oligosaccharides.. It participates in glycan degradation; xylan degradation. Functionally, acetylxylan esterase involved in the hydrolysis of xylan, a major structural heterogeneous polysaccharide found in plant biomass representing the second most abundant polysaccharide in the biosphere, after cellulose. Degrades acetylated xylans by cleaving acetyl side groups from the hetero-xylan backbone. In Neosartorya fischeri (strain ATCC 1020 / DSM 3700 / CBS 544.65 / FGSC A1164 / JCM 1740 / NRRL 181 / WB 181) (Aspergillus fischerianus), this protein is Probable acetylxylan esterase A (axeA).